Here is a 323-residue protein sequence, read N- to C-terminus: Beta-ketoacyl-[acyl-carrier-protein] synthase III (323 aa).

Active-site residues include Cys-114 and His-250. The segment at 251 to 255 (QANRR) is ACP-binding. Asn-280 is an active-site residue.

This sequence belongs to the thiolase-like superfamily. FabH family. In terms of assembly, homodimer.

The protein localises to the cytoplasm. It carries out the reaction malonyl-[ACP] + acetyl-CoA + H(+) = 3-oxobutanoyl-[ACP] + CO2 + CoA. It participates in lipid metabolism; fatty acid biosynthesis. Catalyzes the condensation reaction of fatty acid synthesis by the addition to an acyl acceptor of two carbons from malonyl-ACP. Catalyzes the first condensation reaction which initiates fatty acid synthesis and may therefore play a role in governing the total rate of fatty acid production. Possesses both acetoacetyl-ACP synthase and acetyl transacylase activities. Its substrate specificity determines the biosynthesis of branched-chain and/or straight-chain of fatty acids. In Rhodospirillum centenum (strain ATCC 51521 / SW), this protein is Beta-ketoacyl-[acyl-carrier-protein] synthase III.